The following is a 1199-amino-acid chain: DNA-directed RNA polymerase subunit beta (1199 aa).

A disordered region spans residues Glu1177 to Glu1199.

Belongs to the RNA polymerase beta chain family. In terms of assembly, the RNAP catalytic core consists of 2 alpha, 1 beta, 1 beta' and 1 omega subunit. When a sigma factor is associated with the core the holoenzyme is formed, which can initiate transcription.

The enzyme catalyses RNA(n) + a ribonucleoside 5'-triphosphate = RNA(n+1) + diphosphate. Its function is as follows. DNA-dependent RNA polymerase catalyzes the transcription of DNA into RNA using the four ribonucleoside triphosphates as substrates. The chain is DNA-directed RNA polymerase subunit beta from Ligilactobacillus salivarius (strain UCC118) (Lactobacillus salivarius).